Reading from the N-terminus, the 511-residue chain is ATP synthase subunit alpha (511 aa).

169–176 (GDRQTGKT) contacts ATP.

The protein belongs to the ATPase alpha/beta chains family. F-type ATPases have 2 components, CF(1) - the catalytic core - and CF(0) - the membrane proton channel. CF(1) has five subunits: alpha(3), beta(3), gamma(1), delta(1), epsilon(1). CF(0) has three main subunits: a(1), b(2) and c(9-12). The alpha and beta chains form an alternating ring which encloses part of the gamma chain. CF(1) is attached to CF(0) by a central stalk formed by the gamma and epsilon chains, while a peripheral stalk is formed by the delta and b chains.

The protein resides in the cell inner membrane. The enzyme catalyses ATP + H2O + 4 H(+)(in) = ADP + phosphate + 5 H(+)(out). Its function is as follows. Produces ATP from ADP in the presence of a proton gradient across the membrane. The alpha chain is a regulatory subunit. The chain is ATP synthase subunit alpha from Bartonella bacilliformis (strain ATCC 35685 / KC583 / Herrer 020/F12,63).